A 393-amino-acid polypeptide reads, in one-letter code: Cell division protein FtsZ 2 (393 aa).

A disordered region spans residues 1-28; that stretch reads MQDIVQDALDNAEAEQREMDGDGDGDEF. GTP is bound by residues 40-44, 127-129, E158, R161, and D204; these read GAGNN and GTG. The disordered stretch occupies residues 339–393; the sequence is GPSTQKQADKSRRELQDVDSKQRAADDAGAGGFGGAHSDGGQDEVEQENGLDVIR. The segment covering 345-364 has biased composition (basic and acidic residues); it reads QADKSRRELQDVDSKQRAAD. Positions 367–376 are enriched in gly residues; it reads GAGGFGGAHS.

This sequence belongs to the FtsZ family. In terms of assembly, homodimer. Polymerizes to form a dynamic ring structure in a strictly GTP-dependent manner. Interacts directly with several other division proteins.

The protein localises to the cytoplasm. Its function is as follows. Essential cell division protein that forms a contractile ring structure (Z ring) at the future cell division site. The regulation of the ring assembly controls the timing and the location of cell division. One of the functions of the FtsZ ring is to recruit other cell division proteins to the septum to produce a new cell wall between the dividing cells. Binds GTP and shows GTPase activity. Overexpression causes significant changes in cell morphology. The protein is Cell division protein FtsZ 2 of Halobacterium salinarum (strain ATCC 29341 / DSM 671 / R1).